The sequence spans 333 residues: Probable tRNA pseudouridine synthase B (333 aa).

The active-site Nucleophile is the D66. A PUA domain is found at L233–M308.

It belongs to the pseudouridine synthase TruB family. Type 2 subfamily.

It carries out the reaction uridine(55) in tRNA = pseudouridine(55) in tRNA. Its function is as follows. Could be responsible for synthesis of pseudouridine from uracil-55 in the psi GC loop of transfer RNAs. The chain is Probable tRNA pseudouridine synthase B from Methanococcus maripaludis (strain C7 / ATCC BAA-1331).